A 429-amino-acid chain; its full sequence is Glutamate-1-semialdehyde 2,1-aminomutase (429 aa).

K265 is subject to N6-(pyridoxal phosphate)lysine.

The protein belongs to the class-III pyridoxal-phosphate-dependent aminotransferase family. HemL subfamily. In terms of assembly, homodimer. Pyridoxal 5'-phosphate is required as a cofactor.

It localises to the cytoplasm. It catalyses the reaction (S)-4-amino-5-oxopentanoate = 5-aminolevulinate. It functions in the pathway porphyrin-containing compound metabolism; protoporphyrin-IX biosynthesis; 5-aminolevulinate from L-glutamyl-tRNA(Glu): step 2/2. The polypeptide is Glutamate-1-semialdehyde 2,1-aminomutase (Chromohalobacter salexigens (strain ATCC BAA-138 / DSM 3043 / CIP 106854 / NCIMB 13768 / 1H11)).